Here is a 446-residue protein sequence, read N- to C-terminus: Glutamine synthetase (446 aa).

In terms of domain architecture, GS beta-grasp spans 18 to 103 (ENVRYLRLQF…LICDVFKTDG (86 aa)). One can recognise a GS catalytic domain in the interval 110 to 446 (PRANLKRVLR…WEREQYIKQY (337 aa)). Residues E134 and E136 each coordinate Mg(2+). ATP is bound at residue E186. E191 and E198 together coordinate Mg(2+). L-glutamate is bound by residues 242–243 (NG) and G243. H247 is a Mg(2+) binding site. Residue S251 participates in ATP binding. L-glutamate-binding residues include R300, E306, and R318. R318 and R323 together coordinate ATP. E335 contributes to the Mg(2+) binding site. R337 serves as a coordination point for L-glutamate.

It belongs to the glutamine synthetase family. Oligomer of 12 subunits arranged in the form of two hexagons. In its feedback-inhibited form, interacts with TnrA in order to block its DNA-binding activity. The cofactor is Mg(2+).

It is found in the cytoplasm. It catalyses the reaction L-glutamate + NH4(+) + ATP = L-glutamine + ADP + phosphate + H(+). Its activity is regulated as follows. Inhibited by glutamine. In terms of biological role, glutamine synthetase (GS) is an unusual multitasking protein that functions as an enzyme, a transcription coregulator, and a chaperone in ammonium assimilation and in the regulation of genes involved in nitrogen metabolism. It catalyzes the ATP-dependent biosynthesis of glutamine from glutamate and ammonia. Feedback-inhibited GlnA also interacts with and regulates the activity of the transcriptional regulator TnrA. During nitrogen limitation, TnrA is in its DNA-binding active state and turns on the transcription of genes required for nitrogen assimilation. Under conditions of nitrogen excess, feedback-inhibited GlnA forms a stable complex with TnrA, which inhibits its DNA-binding activity. In contrast, feedback-inhibited GlnA acts as a chaperone to stabilize the DNA-binding activity of GlnR, which represses the transcription of nitrogen assimilation genes. This Staphylococcus epidermidis (strain ATCC 35984 / DSM 28319 / BCRC 17069 / CCUG 31568 / BM 3577 / RP62A) protein is Glutamine synthetase.